We begin with the raw amino-acid sequence, 1489 residues long: Chromosome partition protein MukB (1489 aa).

34-41 contributes to the ATP binding site; that stretch reads GGNGAGKS. 7 coiled-coil regions span residues 326 to 418, 444 to 472, 509 to 602, 780 to 805, 835 to 919, 977 to 1116, and 1209 to 1266; these read LEAD…QYNQ, LETFQAKEQEATEKLLSLEQKMSVAQTAH, RHLA…QRAP, RAARENRIESLHAEREGLSERFATLS, EAEI…GNQL, EMLS…AKAG, and VEAI…QNVS. A flexible hinge region spans residues 666 to 783; that stretch reads PGGSEDSRLN…TVPIFGRAAR (118 aa).

The protein belongs to the SMC family. MukB subfamily. Homodimerization via its hinge domain. Binds to DNA via its C-terminal region. Interacts, and probably forms a ternary complex, with MukE and MukF via its C-terminal region. The complex formation is stimulated by calcium or magnesium. Interacts with tubulin-related protein FtsZ.

It is found in the cytoplasm. The protein resides in the nucleoid. In terms of biological role, plays a central role in chromosome condensation, segregation and cell cycle progression. Functions as a homodimer, which is essential for chromosome partition. Involved in negative DNA supercoiling in vivo, and by this means organize and compact chromosomes. May achieve or facilitate chromosome segregation by condensation DNA from both sides of a centrally located replisome during cell division. In Citrobacter koseri (strain ATCC BAA-895 / CDC 4225-83 / SGSC4696), this protein is Chromosome partition protein MukB.